The chain runs to 63 residues: Large ribosomal subunit protein uL29 (63 aa).

This sequence belongs to the universal ribosomal protein uL29 family.

The chain is Large ribosomal subunit protein uL29 from Idiomarina loihiensis (strain ATCC BAA-735 / DSM 15497 / L2-TR).